Reading from the N-terminus, the 198-residue chain is Recombination protein RecR (198 aa).

The segment at 57–72 (CSVCGHITDKDPCYIC) adopts a C4-type zinc-finger fold. Residues 80-175 (SVICVVQESK…KVTRIAHGLP (96 aa)) enclose the Toprim domain.

The protein belongs to the RecR family.

Functionally, may play a role in DNA repair. It seems to be involved in an RecBC-independent recombinational process of DNA repair. It may act with RecF and RecO. The polypeptide is Recombination protein RecR (Listeria monocytogenes serotype 4b (strain CLIP80459)).